The sequence spans 182 residues: Protein GrpE (182 aa).

Belongs to the GrpE family. Homodimer.

Its subcellular location is the cytoplasm. Functionally, participates actively in the response to hyperosmotic and heat shock by preventing the aggregation of stress-denatured proteins, in association with DnaK and GrpE. It is the nucleotide exchange factor for DnaK and may function as a thermosensor. Unfolded proteins bind initially to DnaJ; upon interaction with the DnaJ-bound protein, DnaK hydrolyzes its bound ATP, resulting in the formation of a stable complex. GrpE releases ADP from DnaK; ATP binding to DnaK triggers the release of the substrate protein, thus completing the reaction cycle. Several rounds of ATP-dependent interactions between DnaJ, DnaK and GrpE are required for fully efficient folding. The polypeptide is Protein GrpE (Aquifex aeolicus (strain VF5)).